A 492-amino-acid polypeptide reads, in one-letter code: Protein adenylyltransferase Fic (492 aa).

Low complexity predominate over residues 1–17 (MCTEAEQPSPPAQQQEQ). The tract at residues 1–25 (MCTEAEQPSPPAQQQEQGNPPLCKA) is disordered. A helical transmembrane segment spans residues 33 to 55 (LYRLVLLFVAGSLAAWTFHALSS). 2 TPR repeats span residues 118 to 151 (ALGA…APRH) and 152 to 186 (PEVL…SPSN). The short motif at 243–248 (SVGIEG) is the Inhibitory (S/T)XXXE(G/N) motif element. ATP contacts are provided by residues glutamate 247 and 328–331 (VGGH). The Fido domain maps to 297 to 432 (ITIKDILELH…IRPFVRFIAD (136 aa)). Residue histidine 375 is part of the active site. ATP is bound by residues 379–386 (DGNGRTSR), 411–412 (YY), and asparagine 419.

The protein belongs to the fic family. Homodimer.

The protein resides in the membrane. It catalyses the reaction L-tyrosyl-[protein] + ATP = O-(5'-adenylyl)-L-tyrosyl-[protein] + diphosphate. The enzyme catalyses L-threonyl-[protein] + ATP = 3-O-(5'-adenylyl)-L-threonyl-[protein] + diphosphate. The catalysed reaction is 3-O-(5'-adenylyl)-L-threonyl-[protein] + H2O = L-threonyl-[protein] + AMP + H(+). The side chain of Glu-247 determines which of the two opposing activities (AMPylase or de-AMPylase) will take place. In response to endoplasmic reticulum stress, mediates de-AMPylase activity. Adenylyltransferase activity is inhibited by the inhibitory helix present at the N-terminus: Glu-247 binds ATP and competes with ATP-binding at Arg-386, thereby preventing adenylyltransferase activity. In unstressed cells, disengagement of Glu-247 promotes adenylyltransferase activity. Activation dissociates ATP-binding from Glu-247, allowing ordered binding of the entire ATP moiety with the alpha-phosphate in an orientation that is productive for accepting an incoming target hydroxyl side chain. Protein that can both mediate the addition of adenosine 5'-monophosphate (AMP) to specific residues of target proteins (AMPylation), and the removal of the same modification from target proteins (de-AMPylation), depending on the context. The side chain of Glu-247 determines which of the two opposing activities (AMPylase or de-AMPylase) will take place. Acts as a key regulator of the unfolded protein response (UPR) by mediating AMPylation or de-AMPylation of Hsc70-3/BiP. In unstressed cells, acts as an adenylyltransferase by mediating AMPylation of Hsc70-3/BiP at 'Thr-518', thereby inactivating it. In response to endoplasmic reticulum stress, acts as a phosphodiesterase by mediating removal of ATP (de-AMPylation) from Hsc70-3/BiP at 'Thr-518', leading to restore HSPA5/BiP activity. The sequence is that of Protein adenylyltransferase Fic from Drosophila sechellia (Fruit fly).